Here is a 339-residue protein sequence, read N- to C-terminus: Histidine protein methyltransferase 1 (339 aa).

A phosphoserine mark is found at Ser-333 and Ser-338.

This sequence belongs to the methyltransferase superfamily. METTL18 family.

It is found in the cytoplasm. The protein resides in the nucleus. It catalyses the reaction L-histidyl-[protein] + S-adenosyl-L-methionine = N(tele)-methyl-L-histidyl-[protein] + S-adenosyl-L-homocysteine + H(+). In terms of biological role, protein-histidine N-methyltransferase that mediates methylation of target protein on His residues. This is Histidine protein methyltransferase 1 from Schizosaccharomyces pombe (strain 972 / ATCC 24843) (Fission yeast).